Here is an 895-residue protein sequence, read N- to C-terminus: MSSKLRDLIKTVRSCKTAAEERSQIAKESALIRTAMKEEDLESRQRNVAKLLYIHMLGYPTQFGQMECLKLIVSPSYADKRIGYLGLMLLLDEKQEVLLLATNCIRGDIMNSNQFIVGVSLCAFGNICSTAMARDISPEIEKVISHSNPYIRKKAALCAIRVLRKVPDLTENYIPKIKALLSERNHAVILTALTLIIEICEMDSTQIIHFKKMVPQLVRILKSLTSSGYLPEHDIGGVTDPFLQVKILRLLRILGQNDPEASDAMNDILAQVSTNTDSTKNVGNAILYECVQTIMTIESENGLKVMAINILGRFLLNRDNNIRYVALNTLSRVVNTDIQAVQRHRNTIVECLKDPDVSIRCRALDLIYSLVTESNIRVLVRELLNFLLIADAQFKSELVAKLCIVTEKYAPNKRWQIDTILRVMSIAGNFIPDEVPSNLIQLISSTPELSSYAVQKLYLALKQDITQQPLTQVGLWCIGEYGDLLVADKSQLPKDEDGLSLNVSEQAVIDIIDLIFRHATTTQATRQYSLTSLAKLSSRFSQSSLQRIKTMIDNYKQNINLELQQRACEYSTLFDFDKKASILDRMPPIEKQEESPHIGNKNIPTQTPPQQHYQQQQQQPQQQSSQFGSILDGLDSPTQSSANSGNNNNNNNKQGGNAMSLLEDIFGSAPTPTSNGNMNNNNNMNNMNNNMNNNYAMGGMGMNNNNNNSMGGMMNNNNNNNNNNNNNNNNNKSQASALLDIMGDLQLTPTPQQPQSQSQQALSPTNQTSVLQPVPQPLTFLVYQKHGLNISYECSKPQPNNLSLTNINMVITNTGSSPITNFSLQAAVPKYLKIQLLAPSSTVIPPNNSGEVTQVSKVLNSQQGQKPILLRLKLDFQINGQPFSDVPDTPLPSLF.

HEAT repeat units lie at residues 130 to 166, 167 to 205, 211 to 256, 301 to 339, and 341 to 376; these read TAMA…LRKV, PDLT…MDST, KKMV…ILGQ, NGLK…TDIQ, and VQRH…ESNI. Disordered stretches follow at residues 591–687, 706–733, and 746–770; these read KQEE…MNNM, NNNS…NNKS, and QLTP…QTSV. Low complexity-rich tracts occupy residues 604 to 626, 639 to 658, 675 to 687, 706 to 731, and 746 to 765; these read PTQT…QSSQ, QSSA…GGNA, NGNM…MNNM, NNNS…NNNN, and QLTP…LSPT. Residues 775 to 893 form the GAE domain; sequence PQPLTFLVYQ…SDVPDTPLPS (119 aa).

It belongs to the adaptor complexes large subunit family. In terms of assembly, adaptor protein complex 1 (AP-1) is a heterotetramer composed of two large adaptins (gamma-type subunit and beta-type subunit), a medium adaptin (mu-type subunit) and a small adaptin (sigma-type subunit). Interacts with rhgA.

The protein resides in the golgi apparatus. Its subcellular location is the trans-Golgi network. It is found in the cytoplasmic vesicle. It localises to the clathrin-coated vesicle membrane. Functionally, subunit of clathrin-associated adaptor protein complex 1 that plays a role in protein sorting in the trans-Golgi network (TGN) and endosomes. The AP complexes mediate the recruitment of clathrin to membranes and the recognition of sorting signals within the cytosolic tails of transmembrane cargo molecules. Also involved in early steps of phagocytosis and macropinocytosis. The chain is AP-1 complex subunit gamma (ap1g1) from Dictyostelium discoideum (Social amoeba).